A 304-amino-acid polypeptide reads, in one-letter code: UDP-N-acetylenolpyruvoylglucosamine reductase (304 aa).

The FAD-binding PCMH-type domain occupies 33 to 198 (RVGGPVDILL…ITATFCFESG (166 aa)). Residue R177 is part of the active site. Residue S227 is the Proton donor of the active site. E297 is an active-site residue.

Belongs to the MurB family. It depends on FAD as a cofactor.

The protein localises to the cytoplasm. It carries out the reaction UDP-N-acetyl-alpha-D-muramate + NADP(+) = UDP-N-acetyl-3-O-(1-carboxyvinyl)-alpha-D-glucosamine + NADPH + H(+). It participates in cell wall biogenesis; peptidoglycan biosynthesis. In terms of biological role, cell wall formation. This chain is UDP-N-acetylenolpyruvoylglucosamine reductase, found in Clostridium botulinum (strain Alaska E43 / Type E3).